Reading from the N-terminus, the 298-residue chain is Aspartate carbamoyltransferase catalytic subunit (298 aa).

Residues arginine 50 and threonine 51 each coordinate carbamoyl phosphate. L-aspartate is bound at residue lysine 79. Residues arginine 100, histidine 128, and glutamine 131 each coordinate carbamoyl phosphate. L-aspartate contacts are provided by arginine 160 and arginine 221. Positions 260 and 261 each coordinate carbamoyl phosphate.

It belongs to the aspartate/ornithine carbamoyltransferase superfamily. ATCase family. As to quaternary structure, heterooligomer of catalytic and regulatory chains.

The catalysed reaction is carbamoyl phosphate + L-aspartate = N-carbamoyl-L-aspartate + phosphate + H(+). Its pathway is pyrimidine metabolism; UMP biosynthesis via de novo pathway; (S)-dihydroorotate from bicarbonate: step 2/3. Its function is as follows. Catalyzes the condensation of carbamoyl phosphate and aspartate to form carbamoyl aspartate and inorganic phosphate, the committed step in the de novo pyrimidine nucleotide biosynthesis pathway. This Methanosphaerula palustris (strain ATCC BAA-1556 / DSM 19958 / E1-9c) protein is Aspartate carbamoyltransferase catalytic subunit.